Reading from the N-terminus, the 209-residue chain is NDR1/HIN1-like protein 1 (209 aa).

Residues 18 to 38 traverse the membrane as a helical segment; sequence IFWSIIFVLFIIFLTILLIWA. Asparagine 58 is a glycosylation site (N-linked (GlcNAc...) asparagine).

Expressed in rosette leaves, cauline leaves, stems, and siliques, and at lower levels in roots and flowers.

It localises to the cell membrane. Functionally, may play a role in plant immunity. The protein is NDR1/HIN1-like protein 1 of Arabidopsis thaliana (Mouse-ear cress).